The sequence spans 311 residues: Probable manganese-dependent inorganic pyrophosphatase (311 aa).

Mn(2+) contacts are provided by His9, Asp13, Asp15, Asp77, His99, and Asp151.

The protein belongs to the PPase class C family. The cofactor is Mn(2+).

The protein resides in the cytoplasm. The enzyme catalyses diphosphate + H2O = 2 phosphate + H(+). The sequence is that of Probable manganese-dependent inorganic pyrophosphatase from Streptococcus equi subsp. zooepidemicus (strain MGCS10565).